Reading from the N-terminus, the 424-residue chain is Adenosylmethionine-8-amino-7-oxononanoate aminotransferase (424 aa).

Trp-46 contributes to the substrate binding site. 106-107 (GS) contributes to the pyridoxal 5'-phosphate binding site. Tyr-138 is a substrate binding site. Asp-240 contacts pyridoxal 5'-phosphate. Lys-269 and Gly-303 together coordinate substrate. Residue Lys-269 is modified to N6-(pyridoxal phosphate)lysine. 304 to 305 (HS) serves as a coordination point for pyridoxal 5'-phosphate. Arg-391 provides a ligand contact to substrate.

It belongs to the class-III pyridoxal-phosphate-dependent aminotransferase family. BioA subfamily. Homodimer. It depends on pyridoxal 5'-phosphate as a cofactor.

It localises to the cytoplasm. It catalyses the reaction (8S)-8-amino-7-oxononanoate + S-adenosyl-L-methionine = S-adenosyl-4-methylsulfanyl-2-oxobutanoate + (7R,8S)-7,8-diammoniononanoate. It participates in cofactor biosynthesis; biotin biosynthesis; 7,8-diaminononanoate from 8-amino-7-oxononanoate (SAM route): step 1/1. Functionally, catalyzes the transfer of the alpha-amino group from S-adenosyl-L-methionine (SAM) to 7-keto-8-aminopelargonic acid (KAPA) to form 7,8-diaminopelargonic acid (DAPA). It is the only aminotransferase known to utilize SAM as an amino donor. Complements a bioU deletion in Synechocystis PCC 6803. This is Adenosylmethionine-8-amino-7-oxononanoate aminotransferase from Synechococcus elongatus (strain ATCC 33912 / PCC 7942 / FACHB-805) (Anacystis nidulans R2).